The chain runs to 602 residues: Cholinesterase (602 aa).

Residues 1 to 28 (MQSRSTVIYIRFVLWFLLLWVLFEKSHT) form the signal peptide. Residues Asn-85 and Asn-134 are each glycosylated (N-linked (GlcNAc...) asparagine). Residue 144–145 (GS) participates in substrate binding. The Acyl-ester intermediate role is filled by Ser-226. At Ser-226 the chain carries Phosphoserine. 2 N-linked (GlcNAc...) asparagine glycosylation sites follow: Asn-269 and Asn-284. Glu-353 functions as the Charge relay system in the catalytic mechanism. An N-linked (GlcNAc...) asparagine glycan is attached at Asn-369. Catalysis depends on His-466, which acts as the Charge relay system. 4 N-linked (GlcNAc...) asparagine glycosylation sites follow: Asn-483, Asn-509, Asn-513, and Asn-514.

This sequence belongs to the type-B carboxylesterase/lipase family. Homotetramer; disulfide-linked. Dimer of dimers. In terms of tissue distribution, present in most cells except erythrocytes.

It is found in the secreted. The enzyme catalyses an acylcholine + H2O = a carboxylate + choline + H(+). Its function is as follows. Esterase with broad substrate specificity. Contributes to the inactivation of the neurotransmitter acetylcholine. Can degrade neurotoxic organophosphate esters. The protein is Cholinesterase (BCHE) of Bos taurus (Bovine).